The primary structure comprises 677 residues: Mitochondrial disaggregase (677 aa).

The N-terminal 28 residues, 1 to 28 (MLGSLVSKRTAPAPRLLLQLLRSPSLRS), are a transit peptide targeting the mitochondrion. An autoinhibitory region spans residues 92-126 (PSPEDTLPGQDSWNGVLSRAGLGVWALATALVVHC). 4 ANK repeats span residues 133–162 (SKDAALMEAARANNVQEVSRLLSEGADVNA), 166–195 (LGWTALMVAAINRNDSVVQVLLAAGADPNL), 235–265 (KGCTALHYAVLADDYRTVKELLDGGANPLQR), and 268–297 (MGHTPLDYAREGEVMKLLRTSETKYQEKQR). 10 residues coordinate ATP: His-316, Ile-318, Ser-353, Gly-354, Ile-355, Gly-356, Lys-357, Thr-358, Glu-425, and Asn-466. Residues 477-505 (LQLRQEALEMSRNRIAENLGDVQISDKIT) form a regulatory; slows ATPase and disaggregase activities region. Arg-531 serves as a coordination point for ATP. Lys-559 carries the N6-acetyllysine modification. Arg-590 contributes to the ATP binding site.

This sequence belongs to the ClpA/ClpB family. In terms of assembly, homododecamer when substrate-bound; the homododecamer consists of 2 homohexamers stacked head-to-head via ANK repeat-mediated interactions. The active substrate-bound form is likely to exist in a dynamic equilibrium between homohexamers and homododecamers. Homotetradecamer in the unbound state which is remodeled upon substrate binding into the homododecamer. Interacts with PHB and PHB2. Interacts with MAVS; the interaction is enhanced by Sendai virus infection. Proteolytically cleaved by protease PARL. ATP-dependent protein disaggregase activity is stimulated by PARL-mediated cleavage of the N-terminal autoinhibitory peptide.

Its subcellular location is the mitochondrion intermembrane space. The enzyme catalyses ATP + H2O = ADP + phosphate + H(+). With respect to regulation, disaggregase activity is inhibited by ADP. In terms of biological role, functions as a regulatory ATPase and participates in secretion/protein trafficking process. Has ATP-dependent protein disaggregase activity and is required to maintain the solubility of key mitochondrial proteins. Involved in mitochondrial-mediated antiviral innate immunity, activates RIG-I-mediated signal transduction and production of IFNB1 and pro-inflammatory cytokine IL6. Plays a role in granulocyte differentiation. This is Mitochondrial disaggregase from Bos taurus (Bovine).